Reading from the N-terminus, the 405-residue chain is Imidazolonepropionase (405 aa).

Positions 73 and 75 each coordinate Fe(3+). Residues His-73 and His-75 each coordinate Zn(2+). Residues Arg-82, Tyr-145, and His-178 each contribute to the 4-imidazolone-5-propanoate site. Tyr-145 is a binding site for N-formimidoyl-L-glutamate. His-243 contacts Fe(3+). His-243 is a binding site for Zn(2+). Gln-246 contributes to the 4-imidazolone-5-propanoate binding site. Fe(3+) is bound at residue Asp-318. Residue Asp-318 participates in Zn(2+) binding. The N-formimidoyl-L-glutamate site is built by Asn-320 and Gly-322. Residue Thr-323 coordinates 4-imidazolone-5-propanoate.

It belongs to the metallo-dependent hydrolases superfamily. HutI family. Zn(2+) is required as a cofactor. Requires Fe(3+) as cofactor.

It is found in the cytoplasm. It catalyses the reaction 4-imidazolone-5-propanoate + H2O = N-formimidoyl-L-glutamate. The protein operates within amino-acid degradation; L-histidine degradation into L-glutamate; N-formimidoyl-L-glutamate from L-histidine: step 3/3. Its function is as follows. Catalyzes the hydrolytic cleavage of the carbon-nitrogen bond in imidazolone-5-propanoate to yield N-formimidoyl-L-glutamate. It is the third step in the universal histidine degradation pathway. In Brucella anthropi (strain ATCC 49188 / DSM 6882 / CCUG 24695 / JCM 21032 / LMG 3331 / NBRC 15819 / NCTC 12168 / Alc 37) (Ochrobactrum anthropi), this protein is Imidazolonepropionase.